The following is a 1141-amino-acid chain: LRR receptor-like serine/threonine-protein kinase RGI1 (1141 aa).

A signal peptide spans 1–33; the sequence is MSLHSLIFFSSSSSSLLFSFFFIFIFCFSLSDA. Residues 34-726 are Extracellular-facing; sequence EQNPEASILY…DASRTRKLRL (693 aa). A disulfide bridge links C69 with C77. N-linked (GlcNAc...) asparagine glycosylation occurs at N71. LRR repeat units lie at residues 80-104, 105-128, 130-152, 153-176, 178-200, 202-225, 226-249, 250-273, 275-297, 298-321, 322-345, 347-369, 370-392, 394-417, 418-441, 443-464, 465-489, 490-513, 514-537, 538-561, 563-585, 586-609, 610-634, 636-657, and 658-682; these read QGFITDIDIESVPLQLSLPKNLPAF, RSLQKLTISGANLTGTLPESLGDC, GLKVLDLSSNGLVGDIPWSLSKL, RNLETLILNSNQLTGKIPPDISKC, KLKSLILFDNLLTGSIPTELGKL, GLEVIRIGGNKEISGQIPSEIGDC, SNLTVLGLAETSVSGNLPSSLGKL, KKLETLSIYTTMISGEIPSDLGNC, ELVDLFLYENSLSGSIPREIGQL, TKLEQLFLWQNSLVGGIPEEIGNC, SNLKMIDLSLNLLSGSIPSSIGRL, FLEEFMISDNKFSGSIPTTISNC, SSLVQLQLDKNQISGLIPSELGT, TKLTLFFAWSNQLEGSIPPGLADC, TDLQALDLSRNSLTGTIPSGLFML, NLTKLLLISNSLSGFIPQEIGN, CSSLVRLRLGFNRITGEIPSGIGSL, KKINFLDFSSNRLHGKVPDEIGSC, SELQMIDLSNNSLEGSLPNPVSSL, SGLQVLDVSANQFSGKIPASLGRL, SLNKLILSKNLFSGSIPTSLGMC, SGLQLLDLGSNELSGEIPSELGDI, ENLEIALNLSSNRLTGKIPSKIASL, KLSILDLSHNMLEGDLAPLANI, and ENLVSLNISYNSFSGYLPDNKLFRQ. N116 carries an N-linked (GlcNAc...) asparagine glycan. 2 consecutive short sequence motifs (small peptide recognition) follow at residues 185 to 186 and 207 to 210; these read FD and RIGG. N227 is a glycosylation site (N-linked (GlcNAc...) asparagine). 2 short sequence motifs (small peptide recognition) span residues 230-235 and Y258; that span reads VLGLAE. N272 is a glycosylation site (N-linked (GlcNAc...) asparagine). Positions 280–282 match the Small peptide recognition motif; it reads FLY. A glycan (N-linked (GlcNAc...) asparagine) is linked at N320. 2 consecutive short sequence motifs (small peptide recognition) follow at residues 328 to 331 and 350 to 352; these read DLSL and EFM. The N-linked (GlcNAc...) asparagine glycan is linked to N368. 2 consecutive short sequence motifs (small peptide recognition) follow at residues 398–402 and 424–427; these read LFFAW and DLSR. An N-linked (GlcNAc...) asparagine glycan is attached at N443. The short motif at 446–450 is the Small peptide recognition element; that stretch reads KLLLI. N-linked (GlcNAc...) asparagine glycosylation is present at N464. A Small peptide recognition motif is present at residues 470 to 472; sequence RLR. N523 carries N-linked (GlcNAc...) asparagine glycosylation. A glycan (N-linked (GlcNAc...) asparagine) is linked at N617. A glycan (N-linked (GlcNAc...) asparagine) is linked at N664. The helical transmembrane segment at 727 to 747 threads the bilayer; sequence TLALLITLTVVLMILGAVAVI. The Cytoplasmic segment spans residues 748–1141; it reads RARRNIDNER…LLYSSSSSIE (394 aa). One can recognise a Protein kinase domain in the interval 786–1074; sequence LVEPNVIGKG…EIKQEREEYA (289 aa). ATP contacts are provided by residues 792–800 and K814; that span reads IGKGCSGVV. Phosphotyrosine occurs at positions 868 and 906. D919 acts as the Proton acceptor in catalysis. A phosphotyrosine mark is found at Y962 and Y969.

It belongs to the protein kinase superfamily. Ser/Thr protein kinase family. Interacts with beet curly top virus AL4/C4. Binds to RGF peptides such as RGF1, GLV5/CLEL1/RGF2, GLV7/CLEL3/RGF3, GLV3/RGF4, GLV10/CLEL7/RGF5 and RGF10/CLELN; these interactions trigger the formation of heterodimers with SERK1, SERK2 or BAK1/SERK3 via LRR regions. Interacts with UBP13. Phosphorylated and ubiquitinated upon interaction with RGF1, thus leading to activation a subsequent degradation. Stabilized by UBP12 and UBP13-mediated deubiquitination. Post-translationally, autophosphorylated. As to expression, expressed in roots.

It localises to the cell membrane. It catalyses the reaction L-seryl-[protein] + ATP = O-phospho-L-seryl-[protein] + ADP + H(+). It carries out the reaction L-threonyl-[protein] + ATP = O-phospho-L-threonyl-[protein] + ADP + H(+). In terms of biological role, together with RGI2, RGI3, RGI4 and RGI5, acts as a receptor of RGF peptides (e.g. RGF1, GLV5/CLEL1/RGF2, GLV7/CLEL3/RGF3, GLV3/RGF4, GLV10/CLEL7/RGF5 and RGF10/CLELN), peptide hormones which maintain the postembryonic root stem cell niche by regulating the expression levels and patterns of the transcription factor PLETHORA (PLT, e.g. PLT1 and PLT2). Links RGF peptides signal with their downstream components. In Arabidopsis thaliana (Mouse-ear cress), this protein is LRR receptor-like serine/threonine-protein kinase RGI1.